A 210-amino-acid polypeptide reads, in one-letter code: Pyridoxine/pyridoxamine 5'-phosphate oxidase (210 aa).

Substrate contacts are provided by residues 7-10 (REDY) and lysine 65. FMN is bound by residues 60–65 (RMVLLK), 75–76 (FT), arginine 81, lysine 82, and glutamine 104. Residues tyrosine 122, arginine 126, and serine 130 each coordinate substrate. FMN-binding positions include 139-140 (QS) and tryptophan 183. Residue 189-191 (RLH) participates in substrate binding. Position 193 (arginine 193) interacts with FMN.

The protein belongs to the pyridoxamine 5'-phosphate oxidase family. In terms of assembly, homodimer. It depends on FMN as a cofactor.

The catalysed reaction is pyridoxamine 5'-phosphate + O2 + H2O = pyridoxal 5'-phosphate + H2O2 + NH4(+). The enzyme catalyses pyridoxine 5'-phosphate + O2 = pyridoxal 5'-phosphate + H2O2. It functions in the pathway cofactor metabolism; pyridoxal 5'-phosphate salvage; pyridoxal 5'-phosphate from pyridoxamine 5'-phosphate: step 1/1. It participates in cofactor metabolism; pyridoxal 5'-phosphate salvage; pyridoxal 5'-phosphate from pyridoxine 5'-phosphate: step 1/1. Catalyzes the oxidation of either pyridoxine 5'-phosphate (PNP) or pyridoxamine 5'-phosphate (PMP) into pyridoxal 5'-phosphate (PLP). This is Pyridoxine/pyridoxamine 5'-phosphate oxidase from Neisseria meningitidis serogroup B (strain ATCC BAA-335 / MC58).